A 357-amino-acid chain; its full sequence is GTPase Obg (357 aa).

An Obg domain is found at 1 to 159 (MKFVDEAFID…RNLKLELKVL (159 aa)). The 175-residue stretch at 160–334 (ADVGLLGMPN…LVQSIFQHVH (175 aa)) folds into the OBG-type G domain. Residues 166 to 173 (GMPNAGKS), 191 to 195 (FTTLH), 213 to 216 (DIPG), 284 to 287 (NKLD), and 315 to 317 (SAL) each bind GTP. Mg(2+) is bound by residues Ser173 and Thr193.

It belongs to the TRAFAC class OBG-HflX-like GTPase superfamily. OBG GTPase family. In terms of assembly, monomer. Requires Mg(2+) as cofactor.

It is found in the cytoplasm. Functionally, an essential GTPase which binds GTP, GDP and possibly (p)ppGpp with moderate affinity, with high nucleotide exchange rates and a fairly low GTP hydrolysis rate. Plays a role in control of the cell cycle, stress response, ribosome biogenesis and in those bacteria that undergo differentiation, in morphogenesis control. This Acidovorax ebreus (strain TPSY) (Diaphorobacter sp. (strain TPSY)) protein is GTPase Obg.